A 129-amino-acid chain; its full sequence is Histone H2A.J (129 aa).

The segment at 1 to 22 (MSGRGKQGGKVRAKAKSRSSRA) is disordered. An N6-acetyllysine mark is found at Lys-6 and Lys-10. A compositionally biased stretch (basic residues) spans 7 to 19 (QGGKVRAKAKSRS). N6-lactoyllysine; alternate is present on Lys-10. The residue at position 105 (Gln-105) is an N5-methylglutamine. Phosphothreonine; by DCAF1 is present on Thr-121.

The protein belongs to the histone H2A family. The nucleosome is a histone octamer containing two molecules each of H2A, H2B, H3 and H4 assembled in one H3-H4 heterotetramer and two H2A-H2B heterodimers. The octamer wraps approximately 147 bp of DNA. Monoubiquitination of Lys-120 (H2AXK119ub) gives a specific tag for epigenetic transcriptional repression. Following DNA double-strand breaks (DSBs), it is ubiquitinated through 'Lys-63' linkage of ubiquitin moieties. Post-translationally, glutamine methylation at Gln-105 (H2AQ104me) by FBL is specifically dedicated to polymerase I. It is present at 35S ribosomal DNA locus and impairs binding of the FACT complex. In terms of processing, phosphorylation on Ser-2 (H2AS1ph) is enhanced during mitosis. Phosphorylation on Ser-2 by RPS6KA5/MSK1 directly represses transcription. Acetylation of H3 inhibits Ser-2 phosphorylation by RPS6KA5/MSK1. Phosphorylation at Thr-121 (H2AT120ph) by DCAF1 is present in the regulatory region of many tumor suppresor genes and down-regulates their transcription.

It localises to the nucleus. The protein resides in the chromosome. Its function is as follows. Core component of nucleosome. Nucleosomes wrap and compact DNA into chromatin, limiting DNA accessibility to the cellular machineries which require DNA as a template. Histones thereby play a central role in transcription regulation, DNA repair, DNA replication and chromosomal stability. DNA accessibility is regulated via a complex set of post-translational modifications of histones, also called histone code, and nucleosome remodeling. This Mus musculus (Mouse) protein is Histone H2A.J.